A 799-amino-acid chain; its full sequence is Zinc finger protein 227 (799 aa).

Residues 23 to 94 form the KRAB domain; the sequence is VTFKDVAVVF…ETETQRSSKH (72 aa). 19 C2H2-type zinc fingers span residues 250–272, 269–291, 324–346, 352–374, 380–402, 408–430, 436–458, 464–486, 492–514, 520–542, 548–570, 576–598, 604–626, 632–654, 660–682, 688–710, 716–738, 744–766, and 772–794; these read HPCGECGRGFSYSPRLPLHPNVH, PNVHTGEKCFSQSSHLRTHQRIH, YRCDSCGKGFSSSTGLIIHYRTH, YKCEECGKCFSQSSNFQCHQRVH, YKCEECGKGFGWSVNLRVHQRVH, YKCEECGKGFTQAAHFHIHQRVH, YKCDVCGKGFSHNSPLICHRRVH, YKCEACGKGFTRNTDLHIHFRVH, YKCKECGKGFSQASNLQVHQNVH, FKCETCGKGFSQSSKLQTHQRVH, YRCDVCGKDFSYSSNLKLHQVIH, YKCEECGKGFSWRSNLHAHQRVH, YKCEQCDKSFSQAIDFRVHQRVH, YKCGVCGKGFSQSSGLQSHQRVH, YKCDVCGKGFRYSSQFIYHQRGH, YKCEECGKGFGRSLNLRHHQRVH, HICEECGKAFSLPSNLRVHLGVH, FKCEECGKGFSQSARLEAHQRVH, and YKCDICDKDFRHRSRLTYHQKVH.

It belongs to the krueppel C2H2-type zinc-finger protein family.

The protein localises to the nucleus. In terms of biological role, may be involved in transcriptional regulation. The chain is Zinc finger protein 227 (ZNF227) from Homo sapiens (Human).